Reading from the N-terminus, the 69-residue chain is UPF0248 protein AF_0420 (69 aa).

It belongs to the UPF0248 family.

The chain is UPF0248 protein AF_0420 from Archaeoglobus fulgidus (strain ATCC 49558 / DSM 4304 / JCM 9628 / NBRC 100126 / VC-16).